The sequence spans 164 residues: V-type proton ATPase 16 kDa proteolipid subunit (164 aa).

At 1-9 (MASFSGDET) the chain is on the lumenal side. A helical membrane pass occupies residues 10 to 32 (APFFGFLGAAAALVFSCMGAAYG). The Cytoplasmic segment spans residues 33 to 54 (TAKSGVGVASMGVMRPELVMKS). The chain crosses the membrane as a helical span at residues 55 to 75 (IVPVVMAGVLGIYGLIIAVII). Over 76 to 94 (STGINPKAKSYYLFDGYAH) the chain is Lumenal. A helical transmembrane segment spans residues 95–116 (LSSGLACGLAGLSAGMAIGIVG). Residues 117 to 128 (DAGVRANAQQPK) are Cytoplasmic-facing. Residues 129–154 (LFVGMILILIFAEALALYGLIVGIIL) form a helical membrane-spanning segment. At 155 to 164 (SSRAGQSRAD) the chain is on the lumenal side.

The protein belongs to the V-ATPase proteolipid subunit family. As to quaternary structure, V-ATPase is a heteromultimeric enzyme composed of a peripheral catalytic V1 complex (main components: subunits A, B, C, D, E, and F) attached to an integral membrane V0 proton pore complex (main component: the proteolipid protein; which is present as a hexamer that forms the proton-conducting pore).

It localises to the vacuole membrane. Its function is as follows. Proton-conducting pore forming subunit of the membrane integral V0 complex of vacuolar ATPase. V-ATPase is responsible for acidifying a variety of intracellular compartments in eukaryotic cells. The protein is V-type proton ATPase 16 kDa proteolipid subunit of Vigna radiata var. radiata (Mung bean).